Consider the following 308-residue polypeptide: Microtubule integrity protein mal3 (308 aa).

A Calponin-homology (CH) domain is found at 2–103 (SESRQELLAW…FVQWAKRFWD (102 aa)). The segment at 117–162 (RGNRGPANTRVMNSSAGATGPSRRRQVSSGSSTPSMTKSSANNNNV) is disordered. The segment covering 144 to 162 (SSGSSTPSMTKSSANNNNV) has biased composition (low complexity). The 75-residue stretch at 173–247 (RAKQAQQQIT…LYSTEDGFEL (75 aa)) folds into the EB1 C-terminal domain.

This sequence belongs to the MAPRE family. In terms of assembly, interacts with tea2.

The protein localises to the cytoplasm. The protein resides in the cytoskeleton. In terms of biological role, may play a role in regulating the integrity of microtubules possibly by influencing their stability. Involved in an anchoring mechanism to maintain tea2 and tip1 at growing microtubule ends. Strongly stimulates the ATPase activity of tea2. In Schizosaccharomyces pombe (strain 972 / ATCC 24843) (Fission yeast), this protein is Microtubule integrity protein mal3 (mal3).